A 352-amino-acid chain; its full sequence is Photosystem II D2 protein (352 aa).

N-acetylthreonine is present on Thr2. Residue Thr2 is modified to Phosphothreonine. The chain crosses the membrane as a helical span at residues 40-60; it reads CAYFALGGWLTGTTFVTSWYT. His117 is a binding site for chlorophyll a. The helical transmembrane segment at 124 to 140 threads the bilayer; sequence GFMLRQFEIARAVKIRP. Positions 129 and 142 each coordinate pheophytin a. Residues 152-165 form a helical membrane-spanning segment; the sequence is VFVSVFLIYPLGQA. His197 lines the chlorophyll a pocket. Residues 207 to 227 form a helical membrane-spanning segment; the sequence is AALLCAIHGATVENTLFEDGD. Positions 214 and 261 each coordinate a plastoquinone. His214 is a binding site for Fe cation. His268 provides a ligand contact to Fe cation. A helical transmembrane segment spans residues 278–294; sequence GLWMSALGVVGLALNLR.

Belongs to the reaction center PufL/M/PsbA/D family. As to quaternary structure, PSII is composed of 1 copy each of membrane proteins PsbA, PsbB, PsbC, PsbD, PsbE, PsbF, PsbH, PsbI, PsbJ, PsbK, PsbL, PsbM, PsbT, PsbX, PsbY, PsbZ, Psb30/Ycf12, at least 3 peripheral proteins of the oxygen-evolving complex and a large number of cofactors. It forms dimeric complexes. The D1/D2 heterodimer binds P680, chlorophylls that are the primary electron donor of PSII, and subsequent electron acceptors. It shares a non-heme iron and each subunit binds pheophytin, quinone, additional chlorophylls, carotenoids and lipids. There is also a Cl(-1) ion associated with D1 and D2, which is required for oxygen evolution. The PSII complex binds additional chlorophylls, carotenoids and specific lipids. serves as cofactor.

The protein localises to the plastid. It is found in the chloroplast thylakoid membrane. It carries out the reaction 2 a plastoquinone + 4 hnu + 2 H2O = 2 a plastoquinol + O2. Photosystem II (PSII) is a light-driven water:plastoquinone oxidoreductase that uses light energy to abstract electrons from H(2)O, generating O(2) and a proton gradient subsequently used for ATP formation. It consists of a core antenna complex that captures photons, and an electron transfer chain that converts photonic excitation into a charge separation. The D1/D2 (PsbA/PsbD) reaction center heterodimer binds P680, the primary electron donor of PSII as well as several subsequent electron acceptors. D2 is needed for assembly of a stable PSII complex. The protein is Photosystem II D2 protein of Tupiella akineta (Green alga).